The chain runs to 399 residues: Phosphoglycerate kinase (399 aa).

Substrate-binding positions include 22–24, arginine 38, 61–64, arginine 120, and arginine 153; these read DFN and HLGR. ATP is bound by residues lysine 206, glycine 297, glutamate 328, and 354–357; that span reads GGDT.

It belongs to the phosphoglycerate kinase family. Monomer.

It is found in the cytoplasm. It catalyses the reaction (2R)-3-phosphoglycerate + ATP = (2R)-3-phospho-glyceroyl phosphate + ADP. Its pathway is carbohydrate degradation; glycolysis; pyruvate from D-glyceraldehyde 3-phosphate: step 2/5. The chain is Phosphoglycerate kinase from Campylobacter concisus (strain 13826).